A 559-amino-acid chain; its full sequence is GTP diphosphokinase CRSH2, chloroplastic (559 aa).

Residues Met-1–Gly-37 constitute a chloroplast transit peptide. Positions Ser-87–Met-187 constitute an HD domain. EF-hand domains follow at residues Ala-449–Gly-484 and Lys-486–Lys-518. Asp-462, Asn-464, Asp-466, Arg-468, Glu-473, Asp-496, Asn-498, Asp-500, Ser-502, and Glu-507 together coordinate Ca(2+).

Belongs to the RelA/SpoT family. In terms of tissue distribution, expressed in shoots.

The protein localises to the plastid. The protein resides in the chloroplast. It catalyses the reaction GTP + ATP = guanosine 3'-diphosphate 5'-triphosphate + AMP. Its activity is regulated as follows. Activated by calcium. Functionally, possesses calcium-dependent ppGpp (guanosine 3'-diphosphate 5'-diphosphate) synthetase activity in vitro and is able to functionally complement E.coli relA mutants. May be involved in a rapid plant ppGpp-mediated response to pathogens and other stresses. This chain is GTP diphosphokinase CRSH2, chloroplastic, found in Oryza sativa subsp. japonica (Rice).